A 252-amino-acid polypeptide reads, in one-letter code: Chlorophyll a-b binding protein P4, chloroplastic (252 aa).

Tryptophan 56 provides a ligand contact to chlorophyll b. Residues phenylalanine 76 and glutamate 95 each coordinate chlorophyll a. Position 100 (arginine 100) interacts with chlorophyll b. 2 helical membrane-spanning segments follow: residues 101 to 121 and 134 to 154; these read WAML…IGII and YFAS…YVEI. Residues serine 137, valine 143, glutamate 153, and arginine 156 each coordinate chlorophyll b. The chlorophyll a site is built by lysine 203, glutamate 204, asparagine 207, arginine 209, glutamine 221, and histidine 236.

It belongs to the light-harvesting chlorophyll a/b-binding (LHC) protein family. As to quaternary structure, the LHC complex consists of chlorophyll a-b binding proteins. It depends on Binds at least 14 chlorophylls (8 Chl-a and 6 Chl-b) and carotenoids such as lutein and neoxanthin. as a cofactor. Photoregulated by reversible phosphorylation of its threonine residues.

It is found in the plastid. It localises to the chloroplast thylakoid membrane. In terms of biological role, the light-harvesting complex (LHC) functions as a light receptor, it captures and delivers excitation energy to photosystems with which it is closely associated. Functionally, may channel protons produced in the catalytic Mn center of water oxidation into the thylakoid lumen. This is Chlorophyll a-b binding protein P4, chloroplastic from Pisum sativum (Garden pea).